Consider the following 1065-residue polypeptide: Carbamoyl phosphate synthase large chain (1065 aa).

The interval 1 to 401 (MPKRTDIETI…AMLKAVRSLE (401 aa)) is carboxyphosphate synthetic domain. Residues Arg-129, Arg-169, Gly-175, Gly-176, Lys-208, Ile-210, Glu-215, Gly-241, Ile-242, His-243, Gln-284, and Glu-298 each contribute to the ATP site. The region spanning 133-327 (RNLMYELGAP…IAKLAAKIAV (195 aa)) is the ATP-grasp 1 domain. Mg(2+) contacts are provided by Gln-284, Glu-298, and Asn-300. The Mn(2+) site is built by Gln-284, Glu-298, and Asn-300. Residues 402–546 (TGQVHLELKH…YGTYEEENES (145 aa)) form an oligomerization domain region. A carbamoyl phosphate synthetic domain region spans residues 547-929 (IKSEKPSVVV…ALYKGLVAAG (383 aa)). An ATP-grasp 2 domain is found at 671 to 861 (EQALRDLNIP…MANIATKAIL (191 aa)). ATP contacts are provided by Arg-707, Arg-746, Leu-748, Glu-752, Gly-777, Val-778, His-779, Ser-780, Gln-820, and Glu-832. Residues Gln-820, Glu-832, and Asn-834 each coordinate Mg(2+). Residues Gln-820, Glu-832, and Asn-834 each coordinate Mn(2+). Residues 930 to 1065 (MEIRTEGTVL…EEMPKAEVVH (136 aa)) enclose the MGS-like domain. An allosteric domain region spans residues 930–1065 (MEIRTEGTVL…EEMPKAEVVH (136 aa)).

It belongs to the CarB family. In terms of assembly, composed of two chains; the small (or glutamine) chain promotes the hydrolysis of glutamine to ammonia, which is used by the large (or ammonia) chain to synthesize carbamoyl phosphate. Tetramer of heterodimers (alpha,beta)4. Mg(2+) serves as cofactor. Requires Mn(2+) as cofactor.

It catalyses the reaction hydrogencarbonate + L-glutamine + 2 ATP + H2O = carbamoyl phosphate + L-glutamate + 2 ADP + phosphate + 2 H(+). The catalysed reaction is hydrogencarbonate + NH4(+) + 2 ATP = carbamoyl phosphate + 2 ADP + phosphate + 2 H(+). It functions in the pathway amino-acid biosynthesis; L-arginine biosynthesis; carbamoyl phosphate from bicarbonate: step 1/1. It participates in pyrimidine metabolism; UMP biosynthesis via de novo pathway; (S)-dihydroorotate from bicarbonate: step 1/3. In terms of biological role, large subunit of the glutamine-dependent carbamoyl phosphate synthetase (CPSase). CPSase catalyzes the formation of carbamoyl phosphate from the ammonia moiety of glutamine, carbonate, and phosphate donated by ATP, constituting the first step of 2 biosynthetic pathways, one leading to arginine and/or urea and the other to pyrimidine nucleotides. The large subunit (synthetase) binds the substrates ammonia (free or transferred from glutamine from the small subunit), hydrogencarbonate and ATP and carries out an ATP-coupled ligase reaction, activating hydrogencarbonate by forming carboxy phosphate which reacts with ammonia to form carbamoyl phosphate. The polypeptide is Carbamoyl phosphate synthase large chain (Lysinibacillus sphaericus (strain C3-41)).